Here is a 720-residue protein sequence, read N- to C-terminus: Aminopeptidase RNPEPL1 (720 aa).

321 to 325 (VAMEN) lines the substrate pocket. H348 serves as a coordination point for Zn(2+). E349 acts as the Proton acceptor in catalysis. The Zn(2+) site is built by H352 and E371. Positions 671 to 708 (GLGPSAEPSTEPSTDLGGAEADTNPDSPALLLGDEAPS) are disordered.

It belongs to the peptidase M1 family. Zn(2+) is required as a cofactor.

It catalyses the reaction Release of N-terminal amino acids, preferentially methionine, from peptides and arylamides.. Its function is as follows. Broad specificity aminopeptidase which preferentially hydrolyzes an N-terminal methionine, citrulline or glutamine. The protein is Aminopeptidase RNPEPL1 of Mus musculus (Mouse).